Consider the following 556-residue polypeptide: Formate--tetrahydrofolate ligase (556 aa).

65–72 is a binding site for ATP; sequence TPAGEGKS.

It belongs to the formate--tetrahydrofolate ligase family.

The enzyme catalyses (6S)-5,6,7,8-tetrahydrofolate + formate + ATP = (6R)-10-formyltetrahydrofolate + ADP + phosphate. The protein operates within one-carbon metabolism; tetrahydrofolate interconversion. This chain is Formate--tetrahydrofolate ligase, found in Streptococcus pneumoniae (strain JJA).